A 303-amino-acid chain; its full sequence is Esterase (303 aa).

An Involved in the stabilization of the negatively charged intermediate by the formation of the oxyanion hole motif is present at residues 79–81 (HGG). Residues Ser-149 and Glu-244 contribute to the active site.

Belongs to the 'GDXG' lipolytic enzyme family.

Its subcellular location is the secreted. The sequence is that of Esterase (est) from Acinetobacter venetianus (strain ATCC 31012 / DSM 23050 / BCRC 14357 / CCUG 45561 / CIP 110063 / KCTC 2702 / LMG 19082 / RAG-1).